A 1121-amino-acid chain; its full sequence is Solute carrier family 38 member 10 (1121 aa).

10 helical membrane passes run 4-24, 36-58, 84-104, 120-140, 153-173, 229-249, 272-292, 323-343, 345-365, and 378-398; these read AAAS…GVSV, IVLG…MFLV, LVET…YVVI, VGGT…VLPL, FSAM…LSSL, IFAS…FFGY, MLRV…ILPC, ALTL…PNVE, ILGL…PALI, and VVLW…LSVS. Disordered regions lie at residues 434-691, 731-904, and 965-1068; these read VVAV…EEAG, KEIH…AATG, and ISDG…ELAP. Basic and acidic residues-rich tracts occupy residues 439-454, 466-475, 493-508, and 544-559; these read EDGR…REEL, PGREDGKEAQ, EAHR…KVVV, and DSER…EVGK. Serine 612 is modified (phosphoserine). Basic and acidic residues-rich tracts occupy residues 645 to 659, 668 to 679, 731 to 752, 763 to 773, 802 to 811, and 863 to 876; these read DSDH…EEKP, EPREQRDVERAG, KEIH…EVHP, EAPEGKARETM, SLEHPERPVG, and PARE…RLAE. Phosphothreonine is present on threonine 772. At serine 802 the chain carries Phosphoserine. A phosphoserine mark is found at serine 890 and serine 966. A compositionally biased stretch (basic and acidic residues) spans 976–998; that stretch reads HRLDHGGYLEMRKEARGGDHMPV. Serine 999 is modified (phosphoserine). 2 stretches are compositionally biased toward basic and acidic residues: residues 1035 to 1044 and 1057 to 1068; these read DNAKPNRDLK and DLGPHAEGELAP.

This sequence belongs to the amino acid/polyamine transporter 2 family.

The protein resides in the membrane. It catalyses the reaction L-glutamate(out) = L-glutamate(in). The catalysed reaction is L-glutamine(out) = L-glutamine(in). The enzyme catalyses L-alanine(in) = L-alanine(out). It carries out the reaction L-serine(in) = L-serine(out). It catalyses the reaction L-leucine(in) = L-leucine(out). Facilitates bidirectional transport of amino acids. May act as a glutamate sensor that regulates glutamate-glutamine cycle and mTOR signaling in the brain. The transport mechanism remains to be elucidated. The protein is Solute carrier family 38 member 10 of Pongo abelii (Sumatran orangutan).